Consider the following 162-residue polypeptide: ATP synthase subunit b (162 aa).

Residues 6–25 (TLFTLVTFLVLMLAVGKVAW) traverse the membrane as a helical segment.

Belongs to the ATPase B chain family. As to quaternary structure, F-type ATPases have 2 components, F(1) - the catalytic core - and F(0) - the membrane proton channel. F(1) has five subunits: alpha(3), beta(3), gamma(1), delta(1), epsilon(1). F(0) has three main subunits: a(1), b(2) and c(10-14). The alpha and beta chains form an alternating ring which encloses part of the gamma chain. F(1) is attached to F(0) by a central stalk formed by the gamma and epsilon chains, while a peripheral stalk is formed by the delta and b chains.

The protein resides in the cell membrane. In terms of biological role, f(1)F(0) ATP synthase produces ATP from ADP in the presence of a proton or sodium gradient. F-type ATPases consist of two structural domains, F(1) containing the extramembraneous catalytic core and F(0) containing the membrane proton channel, linked together by a central stalk and a peripheral stalk. During catalysis, ATP synthesis in the catalytic domain of F(1) is coupled via a rotary mechanism of the central stalk subunits to proton translocation. Component of the F(0) channel, it forms part of the peripheral stalk, linking F(1) to F(0). The chain is ATP synthase subunit b from Lacticaseibacillus casei (strain BL23) (Lactobacillus casei).